The chain runs to 357 residues: Peptide chain release factor 1 (357 aa).

N5-methylglutamine is present on Gln-234.

The protein belongs to the prokaryotic/mitochondrial release factor family. Methylated by PrmC. Methylation increases the termination efficiency of RF1.

It localises to the cytoplasm. Functionally, peptide chain release factor 1 directs the termination of translation in response to the peptide chain termination codons UAG and UAA. The protein is Peptide chain release factor 1 of Chlorobaculum tepidum (strain ATCC 49652 / DSM 12025 / NBRC 103806 / TLS) (Chlorobium tepidum).